Here is a 123-residue protein sequence, read N- to C-terminus: Putative membrane protein insertion efficiency factor (123 aa).

The disordered stretch occupies residues 1–23; sequence MGSCGGKHTGKGAPKPYSRNFTD.

The protein belongs to the UPF0161 family.

It localises to the cell inner membrane. In terms of biological role, could be involved in insertion of integral membrane proteins into the membrane. The polypeptide is Putative membrane protein insertion efficiency factor (Brucella abortus (strain 2308)).